A 625-amino-acid chain; its full sequence is Very-long-chain aldehyde decarbonylase CER1 (625 aa).

5 helical membrane-spanning segments follow: residues Leu45–Ile65, Gly126–His146, Pro177–Leu197, Thr200–Gly220, and Leu329–Val349. A Fatty acid hydroxylase domain is found at Val138–Thr272.

This sequence belongs to the sterol desaturase family. In terms of assembly, homodimer. Interacts with CER3, CYTB5-B, CYTB5-C, CYTB5-D and CYTB5-E. In terms of tissue distribution, expressed in seedlings, stems, leaves, flowers, fruits and siliques. Not detected in roots, pollen and seeds. Expressed in trichomes, cotyledons, shoot apical meristem and leaf primordia. Preferentially associated with young leaves rather than mature leaves. Expressed in the epidermis of the stem and caulines leaves, in the carpels and the sepals.

Its subcellular location is the endoplasmic reticulum membrane. It catalyses the reaction a long-chain fatty aldehyde + 2 NADPH + O2 + H(+) = a long-chain alkane + formate + 2 NADP(+) + H2O. Aldehyde decarbonylase involved in the conversion of aldehydes to alkanes. Core component of a very-long-chain alkane synthesis complex. Involved in epicuticular wax biosynthesis and pollen fertility. The chain is Very-long-chain aldehyde decarbonylase CER1 (CER1) from Arabidopsis thaliana (Mouse-ear cress).